The following is a 163-amino-acid chain: Neurotrophin-3 (163 aa).

Residues 1 to 3 form the signal peptide; that stretch reads IQS. Residues 4 to 119 constitute a propeptide that is removed on maturation; that stretch reads TSMDQGILTE…VLNRTSRRKR (116 aa). Residue N112 is glycosylated (N-linked (GlcNAc...) asparagine).

The protein belongs to the NGF-beta family.

Its subcellular location is the secreted. Its function is as follows. Seems to promote the survival of visceral and proprioceptive sensory neurons. This chain is Neurotrophin-3 (NTF3), found in Eryx colubrinus colubrinus.